A 60-amino-acid polypeptide reads, in one-letter code: Large ribosomal subunit protein bL32 (60 aa).

The protein belongs to the bacterial ribosomal protein bL32 family.

The polypeptide is Large ribosomal subunit protein bL32 (Clostridium acetobutylicum (strain ATCC 824 / DSM 792 / JCM 1419 / IAM 19013 / LMG 5710 / NBRC 13948 / NRRL B-527 / VKM B-1787 / 2291 / W)).